A 123-amino-acid chain; its full sequence is Large ribosomal subunit protein uL14 (123 aa).

This sequence belongs to the universal ribosomal protein uL14 family. As to quaternary structure, part of the 50S ribosomal subunit. Forms a cluster with proteins L3 and L19. In the 70S ribosome, L14 and L19 interact and together make contacts with the 16S rRNA in bridges B5 and B8.

In terms of biological role, binds to 23S rRNA. Forms part of two intersubunit bridges in the 70S ribosome. The sequence is that of Large ribosomal subunit protein uL14 from Enterobacter sp. (strain 638).